We begin with the raw amino-acid sequence, 132 residues long: Large ribosomal subunit protein uL14 (132 aa).

Belongs to the universal ribosomal protein uL14 family. As to quaternary structure, part of the 50S ribosomal subunit. Forms a cluster with proteins L3 and L24e, part of which may contact the 16S rRNA in 2 intersubunit bridges.

Functionally, binds to 23S rRNA. Forms part of two intersubunit bridges in the 70S ribosome. This is Large ribosomal subunit protein uL14 from Methanococcus maripaludis (strain C7 / ATCC BAA-1331).